Reading from the N-terminus, the 298-residue chain is tRNA dimethylallyltransferase (298 aa).

16-23 (GPTASGKS) provides a ligand contact to ATP. Substrate is bound at residue 18–23 (TASGKS). Interaction with substrate tRNA stretches follow at residues 41-44 (DSMQ) and 165-169 (QRIVR).

This sequence belongs to the IPP transferase family. As to quaternary structure, monomer. Requires Mg(2+) as cofactor.

It carries out the reaction adenosine(37) in tRNA + dimethylallyl diphosphate = N(6)-dimethylallyladenosine(37) in tRNA + diphosphate. Catalyzes the transfer of a dimethylallyl group onto the adenine at position 37 in tRNAs that read codons beginning with uridine, leading to the formation of N6-(dimethylallyl)adenosine (i(6)A). The chain is tRNA dimethylallyltransferase from Rhizobium radiobacter (Agrobacterium tumefaciens).